A 444-amino-acid chain; its full sequence is Phosphoglucosamine mutase (444 aa).

Ser102 functions as the Phosphoserine intermediate in the catalytic mechanism. Positions 102, 241, 243, and 245 each coordinate Mg(2+). A Phosphoserine modification is found at Ser102.

It belongs to the phosphohexose mutase family. Requires Mg(2+) as cofactor. Post-translationally, activated by phosphorylation.

The catalysed reaction is alpha-D-glucosamine 1-phosphate = D-glucosamine 6-phosphate. Catalyzes the conversion of glucosamine-6-phosphate to glucosamine-1-phosphate. This is Phosphoglucosamine mutase from Actinobacillus pleuropneumoniae serotype 5b (strain L20).